The sequence spans 432 residues: Putative D-alanyl-D-alanine carboxypeptidase (432 aa).

Residues 7–25 (ATVLLTFSLSAFAVEYPVL) traverse the membrane as a helical; Signal-anchor segment.

Belongs to the peptidase S12 family. YfeW subfamily.

Its subcellular location is the cell inner membrane. The enzyme catalyses Preferential cleavage: (Ac)2-L-Lys-D-Ala-|-D-Ala. Also transpeptidation of peptidyl-alanyl moieties that are N-acyl substituents of D-alanine.. This chain is Putative D-alanyl-D-alanine carboxypeptidase, found in Salmonella choleraesuis (strain SC-B67).